Here is a 254-residue protein sequence, read N- to C-terminus: Small ribosomal subunit protein eS1 (254 aa).

An N-acetylalanine; partial modification is found at A2.

The protein belongs to the eukaryotic ribosomal protein eS1 family. In terms of assembly, component of the small ribosomal subunit. Mature ribosomes consist of a small (40S) and a large (60S) subunit. The 40S subunit contains about 33 different proteins and 1 molecule of RNA (18S). The 60S subunit contains about 49 different proteins and 3 molecules of RNA (25S, 5.8S and 5S).

It is found in the cytoplasm. This is Small ribosomal subunit protein eS1 from Zygosaccharomyces rouxii (strain ATCC 2623 / CBS 732 / NBRC 1130 / NCYC 568 / NRRL Y-229).